Here is a 133-residue protein sequence, read N- to C-terminus: Ribonuclease P protein component (133 aa).

It belongs to the RnpA family. Consists of a catalytic RNA component (M1 or rnpB) and a protein subunit.

The enzyme catalyses Endonucleolytic cleavage of RNA, removing 5'-extranucleotides from tRNA precursor.. Functionally, RNaseP catalyzes the removal of the 5'-leader sequence from pre-tRNA to produce the mature 5'-terminus. It can also cleave other RNA substrates such as 4.5S RNA. The protein component plays an auxiliary but essential role in vivo by binding to the 5'-leader sequence and broadening the substrate specificity of the ribozyme. The polypeptide is Ribonuclease P protein component (Bartonella quintana (strain Toulouse) (Rochalimaea quintana)).